The sequence spans 934 residues: MSDPHSFLGCVRRGLRFDMFKDVARQYPVIFCIFTVMISSTIILNQYLHILMVFWSFLAGVITFYCSLSPEYLLPNILISIKTKRKPQEQHELFPLGHSCAVCGKNQCKRHRPTLLLENYQPWLNLKVPSKVDASISEVLELVLENFVYPWYRDITDDEACVDELRQTIRFFAAVLAHRAQRVDVPSVVMDKMMKAAMKHIEIIAKAQQKVRNTDGLEQAALAEYGADLHVALRSRKDELLYLRKLTELLFPYVMPPKATDCRSLALLIREVMTGSVFLPIMDFVADPDTVNHMVLIFIDDSPPEPVTDPPSTLVPFLERFADPRTKKSSVLKLDLKEIREQQDLLFRFMSFLKEEGAVHVLQFCLTVEEFNDRILCPDLSDDEKQRLHEEVKKIYETYCLEESIDKISFDPFIIEEIHSIAEGPYTGVVKLQTMRCLFEAYEHVLCLLEKVFTPMFCHSDEYFRHLLCGAESPARNSKLNRNTSKRGESFGISRIGSKIKGVFKSSTMEGAMLPQYAMIEGEDDTVEEAVMVFEDDSPGPMDAVGTPGTLRNLSAWTISIPYVDFYDDEVKKERIPVFCIDVERNDRKNVGHETESWSVYRKYVEFYVLESKLTEFHGPFQDAQLPSKRIIGPKNYEFLSSKRGEFEEYLQKLLHHPELSNSQLLADFLSPFSMESQFRDKMLPDVNLGKIFKSVPGKLIKEKGQNLEPFIQSFFSSCESPKPKPSRPELTILSPTAENNKKLFNELYRNNANLPEGLEKKHNQNYFMELMEVDGAYDYMMYIGRVVFRMPDWLHHLLSGVRILLKRTLEAYVGHYFQYKLEQIMEEHRLVSLVTLLRDAVFCESTEERSPEDKQRRAKQTFEEMMNYLPDIVGKCIGEEAKYDGVKMLFNTIQQPLLNKQMTYVLLDIAIQELFPELSKNQKQGLSVSTRWM.

2 helical membrane passes run 27 to 47 (YPVI…LNQY) and 48 to 68 (LHIL…YCSL). Positions 129-303 (PSKVDASISE…MVLIFIDDSP (175 aa)) constitute a PXA domain. The RGS domain maps to 335–467 (DLKEIREQQD…CHSDEYFRHL (133 aa)). The 121-residue stretch at 557–677 (WTISIPYVDF…DFLSPFSMES (121 aa)) folds into the PX domain.

Belongs to the sorting nexin family.

It is found in the lysosome membrane. The protein localises to the late endosome membrane. The protein resides in the cell projection. It localises to the dendrite. Plays a role in maintaining normal neuronal excitability and synaptic transmission. May be involved in several stages of intracellular trafficking. Required for autophagosome clearance, possibly by mediating the fusion of lysosomes with autophagosomes. Binds phosphatidylinositol 3,5-bisphosphate (PtdIns(3,5)P2), a key component of late endosomes/lysosomes. Does not bind phosphatidylinositol 3-phosphate (PtdIns(3P)). This is Sorting nexin-14 from Danio rerio (Zebrafish).